A 2435-amino-acid chain; its full sequence is Highly reducing polyketide synthase ATR6 (2435 aa).

In terms of domain architecture, Ketosynthase family 3 (KS3) spans 18-450 (AEPIAIVSAA…GSNAHVVLDN (433 aa)). Residues Cys-192, His-331, and His-371 each act as for beta-ketoacyl synthase activity in the active site. A malonyl-CoA:ACP transacylase (MAT) domain region spans residues 586-883 (FVFTGQGAQW…EIGPSAALGG (298 aa)). The active-site For malonyltransferase activity is Ser-682. The interval 979 to 1125 (HDLLGGKVLG…GLVRLALNAS (147 aa)) is N-terminal hotdog fold. The segment at 979–1291 (HDLLGGKVLG…LRGISMTSVG (313 aa)) is dehydratase (DH) domain. The PKS/mFAS DH domain occupies 979-1296 (HDLLGGKVLG…MTSVGLQGNV (318 aa)). The For beta-hydroxyacyl dehydratase activity role is filled by His-1011. Residues 1141-1296 (QYPTPARFWY…MTSVGLQGNV (156 aa)) are C-terminal hotdog fold. Positions 1724-2037 (GILDTLHFAE…DHNRLRNVVI (314 aa)) are enoylreductase (ER) domain. A catalytic ketoreductase (KRc) domain region spans residues 2062-2301 (PEQTYLLVGK…ITGIAVPQPG (240 aa)). In terms of domain architecture, Carrier spans 2353–2429 (VLLSSAVGVL…VLCQKIISRM (77 aa)). An O-(pantetheine 4'-phosphoryl)serine modification is found at Ser-2389.

The protein operates within mycotoxin biosynthesis. Highly reducing polyketide synthase; part of the core atranone cluster (CAC) which products are predicted to catalyze most or all steps of mycotoxin atranone synthesis, starting from geranylgeranyl pyrophosphate (GGPP). The initial cyclization of GGPP to dolabellane is probably performed by the terpene cyclase ATR13. The Baeyer-Villiger oxidation near the end of the atranone synthesis, which converts atranones D and E to atranones F and G is predicted to be catalyzed by the monooxygenase ATR8. Of the CAC's other predicted gene products, the reducing PKS ATR6 might synthesize a polyketide chain. This polyketide is probably transferred onto the atranone backbone by the polyketide transferase ATR5. Other predicted CAC products include 4 oxygenases (ATR2, ATR3, ATR4, and ATR14), 3 short-chain reductases (ATR7, ATR9, and ATR10), and a methyltransferase (ATR12). These may all be involved in the various steps of atranone biosynthesis, although their specific roles must await experimental determination. The protein is Highly reducing polyketide synthase ATR6 of Stachybotrys chlorohalonatus (strain IBT 40285).